The sequence spans 111 residues: Photosystem II reaction center Psb28 protein (111 aa).

Belongs to the Psb28 family. As to quaternary structure, part of the photosystem II complex.

It localises to the cellular thylakoid membrane. The chain is Photosystem II reaction center Psb28 protein from Trichormus variabilis (strain ATCC 29413 / PCC 7937) (Anabaena variabilis).